A 628-amino-acid polypeptide reads, in one-letter code: RING finger protein 112 (628 aa).

An RING-type zinc finger spans residues 57 to 98 (CSICLERPREPISLDCGHDFCPRCFSTHRVPGCGPPCCPECR). The interaction with ZBTB16 stretch occupies residues 132 to 628 (AVRAEPLLLV…GDREPLLQEE (497 aa)). One can recognise a GB1/RHD3-type G domain in the interval 167–409 (DTPVCLLAVL…RCPGYWSEGR (243 aa)). 318-319 (RD) contacts GTP. 2 helical membrane-spanning segments follow: residues 544-564 (LAAV…GVVG) and 577-597 (GMVA…GGGV).

The protein belongs to the TRAFAC class dynamin-like GTPase superfamily. GB1/RHD3 GTPase family. GB1 subfamily. As to quaternary structure, self-associates. Interacts with SP1 in an oxidative stress-regulated manner. Interacts with SIGMAR1 in an oxidative stress-regulated manner. Interacts with ZBTB16 (via C2H2-type zinc finger domains 1 and 2). Auto-ubiquitinated.

The protein resides in the membrane. Its subcellular location is the cytoplasm. The protein localises to the nucleus. It is found in the nuclear body. It localises to the nucleoplasm. The protein resides in the endosome. Its subcellular location is the cytoplasmic vesicle. The protein localises to the secretory vesicle. It is found in the synaptic vesicle. It localises to the postsynaptic density. The protein resides in the perikaryon. Its subcellular location is the cell projection. The protein localises to the neuron projection. The enzyme catalyses S-ubiquitinyl-[E2 ubiquitin-conjugating enzyme]-L-cysteine + [acceptor protein]-L-lysine = [E2 ubiquitin-conjugating enzyme]-L-cysteine + N(6)-ubiquitinyl-[acceptor protein]-L-lysine.. It functions in the pathway protein modification; protein ubiquitination. Its function is as follows. E3 ubiquitin-protein ligase that plays an important role in neuronal differentiation, including neurogenesis and gliogenesis, during brain development. During embryonic development initiates neuronal differentiation by inducing cell cycle arrest at the G0/G1 phase through up-regulation of cell-cycle regulatory proteins. Plays a role not only in the fetal period during the development of the nervous system, but also in the adult brain, where it is involved in the maintenance of neural functions and protection of the nervous tissue cells from oxidative stress-induced damage. Exhibits GTPase and E3 ubiquitin-protein ligase activities. Regulates dendritic spine density and synaptic neurotransmission; its ability to hydrolyze GTP is involved in the maintenance of dendritic spine density. This is RING finger protein 112 (RNF112) from Bos taurus (Bovine).